The chain runs to 946 residues: Protein translocase subunit SecA (946 aa).

ATP is bound by residues Gln89, 107-111, and Asp508; that span reads GEGKT. The interval 534–569 is disordered; it reads PEDSHKPPVPLQRRKDSSVGFGKEENNSKDKKVNHS. Basic and acidic residues predominate over residues 546–569; that stretch reads RRKDSSVGFGKEENNSKDKKVNHS.

It belongs to the SecA family. Monomer and homodimer. Part of the essential Sec protein translocation apparatus which comprises SecA, SecYEG and auxiliary proteins SecDF. Other proteins may also be involved.

It is found in the cell inner membrane. Its subcellular location is the cellular thylakoid membrane. The protein resides in the cytoplasm. The enzyme catalyses ATP + H2O + cellular proteinSide 1 = ADP + phosphate + cellular proteinSide 2.. Part of the Sec protein translocase complex. Interacts with the SecYEG preprotein conducting channel. Has a central role in coupling the hydrolysis of ATP to the transfer of proteins into and across the cell membrane, serving as an ATP-driven molecular motor driving the stepwise translocation of polypeptide chains across the membrane. Its function is as follows. Probably participates in protein translocation into and across both the cytoplasmic and thylakoid membranes in cyanobacterial cells. This is Protein translocase subunit SecA from Prochlorococcus marinus (strain SARG / CCMP1375 / SS120).